The following is a 366-amino-acid chain: Protein sigma-NS (366 aa).

The interval 1-11 is important for ssRNA-binding and formation of complexes; it reads MASSLRAAISK.

This sequence belongs to the orthoreovirus sigma-NS protein family. Homooligomer; in presence of RNA. Interacts with protein mu-NS; this interaction allows the localization of sigma-NS to the viral factories. Interacts with host G3BP1 (via C-terminus); this interaction induces the relocalization of G3BP1 and other SG proteins to the viral factories periphery.

Its subcellular location is the host cytoplasm. Protein that binds to ssRNA and participates with protein mu-NS in forming the matrix of viral factories, which are large inclusions in the host cytoplasm where replication intermediates are assembled and viral RNA replication takes place. Plays a role in the inhibition of the integrated stress response (ISR) to escape from host cell translational shutoff. Participates in the disruption of stress granules (SG) through its association with host G3BP1 and mu-NS. This is Protein sigma-NS (S3) from Mammalia (T2J).